We begin with the raw amino-acid sequence, 856 residues long: Mechanosensitive ion channel protein 6 (856 aa).

Disordered stretches follow at residues 45–86 (GEGN…DPPT) and 116–226 (RGLT…PFAA). Basic and acidic residues-rich tracts occupy residues 70–85 (QQKDEGFEFRRGEDPP) and 129–140 (TKRDPVGRRDSR). Residues 155–168 (SGNNAPIQRSSSTL) are compositionally biased toward polar residues. Serine 211 is modified (phosphoserine). A compositionally biased stretch (acidic residues) spans 217–226 (EEEEDDPFAA). A run of 4 helical transmembrane segments spans residues 242–262 (IVLEWLSLILIIAGFVCTLAI), 283–303 (LVLICGRLVSSWIVKIVVFFI), 323–343 (AVQNCLWLGLVLLAWHFLFDE), and 360–380 (IFVCLLVGFLLWLVKTLLVKV). Serine 462 carries the post-translational modification Phosphoserine. The next 2 membrane-spanning stretches (helical) occupy residues 615-635 (MVNIVVGIIILVIWLIILGIT) and 651-671 (AFIFGNMCKIVFESIIYLFVI).

Belongs to the MscS (TC 1.A.23) family.

The protein localises to the membrane. In terms of biological role, mechanosensitive channel that opens in response to stretch forces in the membrane lipid bilayer. The polypeptide is Mechanosensitive ion channel protein 6 (MSL6) (Arabidopsis thaliana (Mouse-ear cress)).